The chain runs to 244 residues: Uridylate kinase (244 aa).

Residue Lys-17–Gly-20 coordinates ATP. An involved in allosteric activation by GTP region spans residues Gly-25 to Gly-30. Gly-59 serves as a coordination point for UMP. 2 residues coordinate ATP: Gly-60 and Arg-64. Residues Asp-80 and Val-141–Thr-148 each bind UMP. Residues Thr-168, Gln-169, Tyr-174, and Asp-177 each coordinate ATP.

The protein belongs to the UMP kinase family. As to quaternary structure, homohexamer.

The protein resides in the cytoplasm. The catalysed reaction is UMP + ATP = UDP + ADP. It participates in pyrimidine metabolism; CTP biosynthesis via de novo pathway; UDP from UMP (UMPK route): step 1/1. Allosterically activated by GTP. Inhibited by UTP. Its function is as follows. Catalyzes the reversible phosphorylation of UMP to UDP. This chain is Uridylate kinase, found in Ehrlichia canis (strain Jake).